The following is a 260-amino-acid chain: Centromere protein K (260 aa).

Residues 84–173 (EEELQKVKKE…KKLMNALGEF (90 aa)) adopt a coiled-coil conformation.

It belongs to the CENP-K/MCM22 family. As to quaternary structure, component of the CENPA-HI complex, at least composed of CENPH, CENPI, CENPK, CENPL, CENPM, CENPO and CENPP.

Its subcellular location is the nucleus. It is found in the chromosome. The protein resides in the centromere. It localises to the kinetochore. Component of the CENPA-HI complex, a centromeric complex involved in assembly of kinetochore proteins, mitotic progression and chromosome segregation. The protein is Centromere protein K (CENPK) of Gallus gallus (Chicken).